We begin with the raw amino-acid sequence, 351 residues long: Peptide chain release factor 1 (351 aa).

Q229 bears the N5-methylglutamine mark. A disordered region spans residues 279–300 (ADAERAADRKSQVGSGDRSERI).

It belongs to the prokaryotic/mitochondrial release factor family. In terms of processing, methylated by PrmC. Methylation increases the termination efficiency of RF1.

The protein resides in the cytoplasm. In terms of biological role, peptide chain release factor 1 directs the termination of translation in response to the peptide chain termination codons UAG and UAA. This chain is Peptide chain release factor 1, found in Paracoccus denitrificans (strain Pd 1222).